A 454-amino-acid polypeptide reads, in one-letter code: tRNA modification GTPase MnmE (454 aa).

Positions 23, 80, and 120 each coordinate (6S)-5-formyl-5,6,7,8-tetrahydrofolate. The 162-residue stretch at Gly-216 to Gly-377 folds into the TrmE-type G domain. A K(+)-binding site is contributed by Asn-226. GTP is bound by residues Asn-226–Ser-231, Thr-245–Thr-251, Asp-270–Gly-273, Asn-335–Asp-338, and Ser-358–Arg-360. Residue Ser-230 participates in Mg(2+) binding. K(+) contacts are provided by Thr-245, Ile-247, and Thr-250. Thr-251 is a binding site for Mg(2+). A (6S)-5-formyl-5,6,7,8-tetrahydrofolate-binding site is contributed by Lys-454.

It belongs to the TRAFAC class TrmE-Era-EngA-EngB-Septin-like GTPase superfamily. TrmE GTPase family. As to quaternary structure, homodimer. Heterotetramer of two MnmE and two MnmG subunits. K(+) is required as a cofactor.

It localises to the cytoplasm. Exhibits a very high intrinsic GTPase hydrolysis rate. Involved in the addition of a carboxymethylaminomethyl (cmnm) group at the wobble position (U34) of certain tRNAs, forming tRNA-cmnm(5)s(2)U34. The sequence is that of tRNA modification GTPase MnmE from Yersinia pestis bv. Antiqua (strain Antiqua).